The chain runs to 934 residues: LPS-assembly protein LptD (934 aa).

The N-terminal stretch at 1–33 is a signal peptide; that stretch reads MALKSPAFRRKFPLLVTGGLLALQPFATSYVVA. The segment at 52–86 is disordered; it reads KSPVNNLPPRPVHDGAALTSGTEAPSAEAESADKP.

The protein belongs to the LptD family. In terms of assembly, component of the lipopolysaccharide transport and assembly complex. Interacts with LptE and LptA.

The protein resides in the cell outer membrane. Together with LptE, is involved in the assembly of lipopolysaccharide (LPS) at the surface of the outer membrane. The protein is LPS-assembly protein LptD of Pseudomonas putida (strain W619).